Here is a 109-residue protein sequence, read N- to C-terminus: uncharacterized protein (109 aa).

This is an uncharacterized protein from Bacillus subtilis (strain 168).